A 107-amino-acid polypeptide reads, in one-letter code: Probable 4-amino-4-deoxy-L-arabinose-phosphoundecaprenol flippase subunit ArnE (107 aa).

In terms of domain architecture, EamA spans 31 to 105; that stretch reads RVWGWLALSL…IIVGIILLGG (75 aa). The next 3 membrane-spanning stretches (helical) occupy residues 34 to 54, 57 to 77, and 85 to 105; these read GWLALSLVLLGCAMLLWLFVL, VPVSVAYPMLSLNFIFITLAA, and IALRHGVGVLLIIVGIILLGG.

It belongs to the ArnE family. Heterodimer of ArnE and ArnF.

The protein localises to the cell inner membrane. Its pathway is bacterial outer membrane biogenesis; lipopolysaccharide biosynthesis. Its function is as follows. Translocates 4-amino-4-deoxy-L-arabinose-phosphoundecaprenol (alpha-L-Ara4N-phosphoundecaprenol) from the cytoplasmic to the periplasmic side of the inner membrane. The protein is Probable 4-amino-4-deoxy-L-arabinose-phosphoundecaprenol flippase subunit ArnE of Enterobacter sp. (strain 638).